A 156-amino-acid polypeptide reads, in one-letter code: Small ribosomal subunit protein uS7 (156 aa).

This sequence belongs to the universal ribosomal protein uS7 family. As to quaternary structure, part of the 30S ribosomal subunit. Contacts proteins S9 and S11.

Functionally, one of the primary rRNA binding proteins, it binds directly to 16S rRNA where it nucleates assembly of the head domain of the 30S subunit. Is located at the subunit interface close to the decoding center, probably blocks exit of the E-site tRNA. This chain is Small ribosomal subunit protein uS7, found in Shouchella clausii (strain KSM-K16) (Alkalihalobacillus clausii).